The chain runs to 131 residues: Small ribosomal subunit protein uS8 (131 aa).

The protein belongs to the universal ribosomal protein uS8 family. Part of the 30S ribosomal subunit. Contacts proteins S5 and S12.

Its function is as follows. One of the primary rRNA binding proteins, it binds directly to 16S rRNA central domain where it helps coordinate assembly of the platform of the 30S subunit. In Paraburkholderia xenovorans (strain LB400), this protein is Small ribosomal subunit protein uS8.